The sequence spans 348 residues: Selenide, water dikinase (348 aa).

The active site involves Cys-17. ATP-binding positions include Lys-20 and Thr-48–Asp-50. Asp-51 contributes to the Mg(2+) binding site. ATP is bound by residues Asp-68, Asp-91, and Gly-139 to Thr-141. Asp-91 lines the Mg(2+) pocket. Asp-227 contacts Mg(2+).

The protein belongs to the selenophosphate synthase 1 family. Class I subfamily. Homodimer. It depends on Mg(2+) as a cofactor.

The enzyme catalyses hydrogenselenide + ATP + H2O = selenophosphate + AMP + phosphate + 2 H(+). Synthesizes selenophosphate from selenide and ATP. The chain is Selenide, water dikinase from Dechloromonas aromatica (strain RCB).